Consider the following 725-residue polypeptide: Aminopeptidase RNPEPL1 (725 aa).

Substrate is bound at residue 326–330; the sequence is VAMEN. Histidine 353 serves as a coordination point for Zn(2+). Glutamate 354 serves as the catalytic Proton acceptor. 2 residues coordinate Zn(2+): histidine 357 and glutamate 376. The segment at 676–699 is disordered; sequence GLGSSTEPASEPSTELGKAEADTD. Positions 679-690 are enriched in low complexity; the sequence is SSTEPASEPSTE.

It belongs to the peptidase M1 family. Requires Zn(2+) as cofactor. Ubiquitously expressed. Expressed at relatively higher levels in heart and skeletal muscle.

The enzyme catalyses Release of N-terminal amino acids, preferentially methionine, from peptides and arylamides.. With respect to regulation, inhibited by calcium but not affected by chloride ions. Inhibited by amastatin and to a lower extent by bestatin. Weakly inhibited by puromycin. Functionally, broad specificity aminopeptidase which preferentially hydrolyzes an N-terminal methionine, citrulline or glutamine. This is Aminopeptidase RNPEPL1 from Homo sapiens (Human).